A 130-amino-acid chain; its full sequence is UPF0212 protein TSIB_1358 (130 aa).

It belongs to the UPF0212 family.

This is UPF0212 protein TSIB_1358 from Thermococcus sibiricus (strain DSM 12597 / MM 739).